A 555-amino-acid chain; its full sequence is Glucose-6-phosphate isomerase (555 aa).

E355 (proton donor) is an active-site residue. Active-site residues include H386 and K514.

Belongs to the GPI family.

Its subcellular location is the cytoplasm. It catalyses the reaction alpha-D-glucose 6-phosphate = beta-D-fructose 6-phosphate. The protein operates within carbohydrate biosynthesis; gluconeogenesis. It participates in carbohydrate degradation; glycolysis; D-glyceraldehyde 3-phosphate and glycerone phosphate from D-glucose: step 2/4. Catalyzes the reversible isomerization of glucose-6-phosphate to fructose-6-phosphate. This Buchnera aphidicola subsp. Schizaphis graminum (strain Sg) protein is Glucose-6-phosphate isomerase.